The sequence spans 574 residues: Septation ring formation regulator EzrA (574 aa).

The Extracellular portion of the chain corresponds to 1–7 (MSSGIIL). A helical membrane pass occupies residues 8-26 (LIVAIVLLVIIAYLVGVII). Over 27 to 574 (RKRNDSLITS…YEKTREHIRF (548 aa)) the chain is Cytoplasmic. Coiled coils occupy residues 102-141 (NFIR…EEKN), 274-350 (ELVT…ETES), and 459-520 (QLEA…SFEA).

This sequence belongs to the EzrA family.

It localises to the cell membrane. Negative regulator of FtsZ ring formation; modulates the frequency and position of FtsZ ring formation. Inhibits FtsZ ring formation at polar sites. Interacts either with FtsZ or with one of its binding partners to promote depolymerization. This is Septation ring formation regulator EzrA from Streptococcus pyogenes serotype M6 (strain ATCC BAA-946 / MGAS10394).